Consider the following 794-residue polypeptide: Protocadherin beta-6 (794 aa).

The N-terminal stretch at 1–27 (MMQTKVQNKKRQVAFFILLMLWGEVGS) is a signal peptide. At 28 to 688 (ESIQYSVLEE…AQADSLTVYL (661 aa)) the chain is on the extracellular side. Cadherin domains lie at 34–132 (VLEE…APEF), 137–241 (MLLK…VPEF), 246–345 (YEAQ…APEL), 350–449 (FISL…APAF), and 454–559 (YTLF…SPFV). Asn-46 carries an N-linked (GlcNAc...) asparagine glycan. A disulfide bridge connects residues Cys-95 and Cys-101. Residue Asn-183 is glycosylated (N-linked (GlcNAc...) asparagine). N-linked (GlcNAc...) asparagine glycosylation is present at Asn-416. N-linked (GlcNAc...) asparagine glycosylation occurs at Asn-565. In terms of domain architecture, Cadherin 6 spans 566-669 (GSAPCTELVP…LVDGFSQPYL (104 aa)). Residues 689-709 (VVALASVSSLFLFSVLLFVAV) form a helical membrane-spanning segment. Topologically, residues 710–794 (RLCRRSRAAS…PTSRNSFPFS (85 aa)) are cytoplasmic. Residues 773 to 794 (PPQGTEREMEETPTSRNSFPFS) form a disordered region. The span at 784-794 (TPTSRNSFPFS) shows a compositional bias: polar residues.

Forms homodimers in trans (molecules expressed by two different cells). Forms promiscuous heterodimers in cis (at the plasma membrane of the same cell) with other protocadherins.

It is found in the cell membrane. Its function is as follows. Calcium-dependent cell-adhesion protein involved in cells self-recognition and non-self discrimination. Thereby, it is involved in the establishment and maintenance of specific neuronal connections in the brain. The chain is Protocadherin beta-6 from Homo sapiens (Human).